A 298-amino-acid polypeptide reads, in one-letter code: N-acetylmuramic acid 6-phosphate etherase (298 aa).

The SIS domain maps to 54–217 (CISAIKNHGR…STVTMIKLGK (164 aa)). The active-site Proton donor is glutamate 82. Residue glutamate 113 is part of the active site.

The protein belongs to the GCKR-like family. MurNAc-6-P etherase subfamily. As to quaternary structure, homodimer.

It catalyses the reaction N-acetyl-D-muramate 6-phosphate + H2O = N-acetyl-D-glucosamine 6-phosphate + (R)-lactate. It participates in amino-sugar metabolism; N-acetylmuramate degradation. In terms of biological role, specifically catalyzes the cleavage of the D-lactyl ether substituent of MurNAc 6-phosphate, producing GlcNAc 6-phosphate and D-lactate. This chain is N-acetylmuramic acid 6-phosphate etherase, found in Petrotoga mobilis (strain DSM 10674 / SJ95).